Reading from the N-terminus, the 233-residue chain is Orotidine 5'-phosphate decarboxylase (233 aa).

Substrate-binding positions include aspartate 9, lysine 31, 58–67, threonine 120, arginine 182, glutamine 191, glycine 211, and arginine 212; that span reads DLKLHDIPNT. Catalysis depends on lysine 60, which acts as the Proton donor.

It belongs to the OMP decarboxylase family. Type 1 subfamily. In terms of assembly, homodimer.

It carries out the reaction orotidine 5'-phosphate + H(+) = UMP + CO2. Its pathway is pyrimidine metabolism; UMP biosynthesis via de novo pathway; UMP from orotate: step 2/2. Its function is as follows. Catalyzes the decarboxylation of orotidine 5'-monophosphate (OMP) to uridine 5'-monophosphate (UMP). This is Orotidine 5'-phosphate decarboxylase from Listeria monocytogenes serotype 4b (strain CLIP80459).